The sequence spans 385 residues: Alkanesulfonate monooxygenase 2 (385 aa).

The protein belongs to the SsuD family.

The enzyme catalyses an alkanesulfonate + FMNH2 + O2 = an aldehyde + FMN + sulfite + H2O + 2 H(+). Catalyzes the desulfonation of aliphatic sulfonates. The sequence is that of Alkanesulfonate monooxygenase 2 (ssuD2) from Mesorhizobium japonicum (strain LMG 29417 / CECT 9101 / MAFF 303099) (Mesorhizobium loti (strain MAFF 303099)).